The chain runs to 259 residues: Phosphate import ATP-binding protein PstB 1 (259 aa).

The region spanning 13–254 is the ABC transporter domain; it reads IQVRGLEFFY…PSKTQTEDYI (242 aa). 45–52 is an ATP binding site; the sequence is GPSGCGKS.

It belongs to the ABC transporter superfamily. Phosphate importer (TC 3.A.1.7) family. As to quaternary structure, the complex is composed of two ATP-binding proteins (PstB), two transmembrane proteins (PstC and PstA) and a solute-binding protein (PstS).

It localises to the cell inner membrane. It carries out the reaction phosphate(out) + ATP + H2O = ADP + 2 phosphate(in) + H(+). Part of the ABC transporter complex PstSACB involved in phosphate import. Responsible for energy coupling to the transport system. The sequence is that of Phosphate import ATP-binding protein PstB 1 from Pseudomonas syringae pv. tomato (strain ATCC BAA-871 / DC3000).